The chain runs to 336 residues: GTPase Obg (336 aa).

In terms of domain architecture, Obg spans 1 to 159 (MKFLDETKVY…KTIWLRLKLI (159 aa)). Positions 160-327 (ADAGLVGLPN…ALRALRSVIA (168 aa)) constitute an OBG-type G domain. GTP contacts are provided by residues 166–173 (GLPNAGKS), 191–195 (FTTLH), 212–215 (DIPG), 279–282 (SQID), and 308–310 (SAV). 2 residues coordinate Mg(2+): Ser-173 and Thr-193.

Belongs to the TRAFAC class OBG-HflX-like GTPase superfamily. OBG GTPase family. Monomer. The cofactor is Mg(2+).

It localises to the cytoplasm. Functionally, an essential GTPase which binds GTP, GDP and possibly (p)ppGpp with moderate affinity, with high nucleotide exchange rates and a fairly low GTP hydrolysis rate. Plays a role in control of the cell cycle, stress response, ribosome biogenesis and in those bacteria that undergo differentiation, in morphogenesis control. This chain is GTPase Obg, found in Rhizobium meliloti (strain 1021) (Ensifer meliloti).